Consider the following 762-residue polypeptide: ATP-dependent RNA helicase SUV3 homolog, mitochondrial (762 aa).

Residues 1–36 constitute a mitochondrion transit peptide; it reads MQNTRRCISLICVTRQPPSLRATYGAVAAARCLHRA. The Helicase ATP-binding domain occupies 181–321; it reads NARALTRKIV…ALELLQKICE (141 aa). Residue 194 to 201 coordinates ATP; that stretch reads GPTNSGKT. Residues 331–508 enclose the Helicase C-terminal domain; sequence RYDRLTELTV…PTADQIELYA (178 aa). The segment at 716-762 is disordered; sequence EWDAQQVGQAAAASTSSKESQESPPDDSDDEDSYPGSYKKTRRKRRK. Residues 721–730 are compositionally biased toward polar residues; that stretch reads QVGQAAAAST. The segment covering 739-748 has biased composition (acidic residues); sequence PPDDSDDEDS.

This sequence belongs to the helicase family. Requires Mg(2+) as cofactor. Mn(2+) serves as cofactor.

It localises to the mitochondrion. The enzyme catalyses ATP + H2O = ADP + phosphate + H(+). Functionally, major helicase player in mitochondrial RNA metabolism and maintenance. Likely component of the mitochondrial degradosome (mtEXO) complex, that degrades 3' overhang double-stranded RNA with a 3'-to-5' directionality in an ATP-dependent manner. ATPase and ATP-dependent multisubstrate helicase, able to unwind double-stranded (ds) DNA and RNA, and RNA/DNA heteroduplexes in the 5'-to-3' direction. Regulates mRNA stability and is required for the correct processing and maturation of mitochondrial transcripts. The sequence is that of ATP-dependent RNA helicase SUV3 homolog, mitochondrial from Drosophila pseudoobscura pseudoobscura (Fruit fly).